The chain runs to 381 residues: Homoserine O-succinyltransferase (381 aa).

The AB hydrolase-1 domain maps to 45–360 (NAVLVCHALN…PHGHDAFLLD (316 aa)). The active-site Nucleophile is serine 151. Arginine 221 is a binding site for substrate. Active-site residues include aspartate 321 and histidine 354. Position 355 (aspartate 355) interacts with substrate.

This sequence belongs to the AB hydrolase superfamily. MetX family. As to quaternary structure, homodimer.

Its subcellular location is the cytoplasm. The enzyme catalyses L-homoserine + succinyl-CoA = O-succinyl-L-homoserine + CoA. The protein operates within amino-acid biosynthesis; L-methionine biosynthesis via de novo pathway; O-succinyl-L-homoserine from L-homoserine: step 1/1. In terms of biological role, transfers a succinyl group from succinyl-CoA to L-homoserine, forming succinyl-L-homoserine. In Burkholderia thailandensis (strain ATCC 700388 / DSM 13276 / CCUG 48851 / CIP 106301 / E264), this protein is Homoserine O-succinyltransferase.